Reading from the N-terminus, the 798-residue chain is Elongation factor G, mitochondrial (798 aa).

The N-terminal 24 residues, 1–24, are a transit peptide targeting the mitochondrion; sequence MRVIRAAAALNSSCAASSRQGARY. Residues 97–383 form the tr-type G domain; sequence SMVRNIGIAA…AVCDYLPNPG (287 aa). GTP-binding positions include 106 to 113, 181 to 185, and 235 to 238; these read AHIDSGKT, DTPGH, and NKMD.

Belongs to the TRAFAC class translation factor GTPase superfamily. Classic translation factor GTPase family. EF-G/EF-2 subfamily.

It localises to the mitochondrion. The protein operates within protein biosynthesis; polypeptide chain elongation. Mitochondrial GTPase that catalyzes the GTP-dependent ribosomal translocation step during translation elongation. During this step, the ribosome changes from the pre-translocational (PRE) to the post-translocational (POST) state as the newly formed A-site-bound peptidyl-tRNA and P-site-bound deacylated tRNA move to the P and E sites, respectively. Catalyzes the coordinated movement of the two tRNA molecules, the mRNA and conformational changes in the ribosome. The polypeptide is Elongation factor G, mitochondrial (Chaetomium globosum (strain ATCC 6205 / CBS 148.51 / DSM 1962 / NBRC 6347 / NRRL 1970) (Soil fungus)).